A 59-amino-acid polypeptide reads, in one-letter code: Conotoxin mr5a (59 aa).

An N-terminal signal peptide occupies residues methionine 1–alanine 22. Residues arginine 23–aspartate 48 constitute a propeptide that is removed on maturation.

Contains 2 disulfide bonds that can be either 'C1-C3, C2-C4' or 'C1-C4, C2-C3', since these disulfide connectivities have been observed for conotoxins with cysteine framework V (for examples, see AC P0DQQ7 and AC P81755). In terms of tissue distribution, expressed by the venom duct.

The protein resides in the secreted. The sequence is that of Conotoxin mr5a from Conus marmoreus (Marble cone).